A 292-amino-acid chain; its full sequence is Acetylglutamate kinase (292 aa).

Residues 64-65, Arg-86, and Asn-190 contribute to the substrate site; that span reads GG.

This sequence belongs to the acetylglutamate kinase family. ArgB subfamily.

Its subcellular location is the cytoplasm. The enzyme catalyses N-acetyl-L-glutamate + ATP = N-acetyl-L-glutamyl 5-phosphate + ADP. It participates in amino-acid biosynthesis; L-arginine biosynthesis; N(2)-acetyl-L-ornithine from L-glutamate: step 2/4. Its function is as follows. Catalyzes the ATP-dependent phosphorylation of N-acetyl-L-glutamate. This Geobacter sp. (strain M21) protein is Acetylglutamate kinase.